The sequence spans 582 residues: Mitogen-activated protein kinase 17 (582 aa).

Residues 22–61 are disordered; that stretch reads SSSFHLTTTGDDTVKDLHDPRREDAEGDGWEEVHEGPESD. A compositionally biased stretch (basic and acidic residues) spans 33–45; the sequence is DTVKDLHDPRRED. The Protein kinase domain occupies 105–396; it reads YKVSEVIGKG…AEEALTDPYF (292 aa). ATP is bound by residues 111 to 119 and Lys-134; that span reads IGKGSYGVV. Asp-231 acts as the Proton acceptor in catalysis. Phosphothreonine is present on Thr-267. The TXY motif lies at 267-269; it reads TDY. Tyr-269 bears the Phosphotyrosine mark. 2 disordered regions span residues 474–502 and 542–582; these read EGVS…GNKH and ISAS…QLKT. The span at 482-491 shows a compositional bias: polar residues; the sequence is SSPQLRQNAS. Residues 493-502 are compositionally biased toward basic and acidic residues; it reads PRERAIGNKH. A compositionally biased stretch (acidic residues) spans 557-572; sequence DQEDSLTESMDETADE.

Belongs to the protein kinase superfamily. CMGC Ser/Thr protein kinase family. MAP kinase subfamily. In terms of processing, dually phosphorylated on Thr-267 and Tyr-269, which activates the enzyme.

It catalyses the reaction L-seryl-[protein] + ATP = O-phospho-L-seryl-[protein] + ADP + H(+). It carries out the reaction L-threonyl-[protein] + ATP = O-phospho-L-threonyl-[protein] + ADP + H(+). With respect to regulation, activated by threonine and tyrosine phosphorylation. This Oryza sativa subsp. japonica (Rice) protein is Mitogen-activated protein kinase 17 (MPK17).